The primary structure comprises 303 residues: Type II methyltransferase M.MjaI (303 aa).

Belongs to the N(4)/N(6)-methyltransferase family. N(4) subfamily.

The enzyme catalyses a 2'-deoxycytidine in DNA + S-adenosyl-L-methionine = an N(4)-methyl-2'-deoxycytidine in DNA + S-adenosyl-L-homocysteine + H(+). A beta subtype methylase that recognizes the double-stranded sequence 5'-CTAG-3', methylates C-1 on both strands, and protects the DNA from cleavage by the MjaI endonuclease. This is Type II methyltransferase M.MjaI (mjaIM) from Methanocaldococcus jannaschii (strain ATCC 43067 / DSM 2661 / JAL-1 / JCM 10045 / NBRC 100440) (Methanococcus jannaschii).